Reading from the N-terminus, the 607-residue chain is Elongation factor 4 (607 aa).

The 183-residue stretch at 11–193 (SRIRNFSIIA…QVVEKVPAPA (183 aa)) folds into the tr-type G domain. Residues 23-28 (DHGKST) and 140-143 (NKID) each bind GTP.

The protein belongs to the TRAFAC class translation factor GTPase superfamily. Classic translation factor GTPase family. LepA subfamily.

Its subcellular location is the cell membrane. It carries out the reaction GTP + H2O = GDP + phosphate + H(+). In terms of biological role, required for accurate and efficient protein synthesis under certain stress conditions. May act as a fidelity factor of the translation reaction, by catalyzing a one-codon backward translocation of tRNAs on improperly translocated ribosomes. Back-translocation proceeds from a post-translocation (POST) complex to a pre-translocation (PRE) complex, thus giving elongation factor G a second chance to translocate the tRNAs correctly. Binds to ribosomes in a GTP-dependent manner. This Shouchella clausii (strain KSM-K16) (Alkalihalobacillus clausii) protein is Elongation factor 4.